Consider the following 202-residue polypeptide: Superoxide dismutase [Mn], mitochondrial (202 aa).

The transit peptide at 1–5 directs the protein to the mitochondrion; that stretch reads HGRGM. His31 provides a ligand contact to Mn(2+). Residue Tyr39 is modified to 3'-nitrotyrosine. Lys49 is subject to N6-acetyllysine; alternate. Lys49 is modified (N6-succinyllysine; alternate). Mn(2+) is bound at residue His79. At Lys95 the chain carries N6-acetyllysine. N6-acetyllysine; alternate occurs at positions 103 and 111. Residues Lys103 and Lys111 each carry the N6-succinyllysine; alternate modification. 2 residues coordinate Mn(2+): Asp164 and His168. N6-acetyllysine is present on Lys183.

It belongs to the iron/manganese superoxide dismutase family. Homotetramer. It depends on Mn(2+) as a cofactor. Nitrated under oxidative stress. Nitration coupled with oxidation inhibits the catalytic activity. Post-translationally, acetylation at Lys-122 decreases enzymatic activity. Deacetylated by SIRT3 upon exposure to ionizing radiations or after long fasting. In terms of processing, polyubiquitinated; leading to proteasomal degradation. Deubiquitinated by USP36 which increases protein stability.

The protein resides in the mitochondrion matrix. The enzyme catalyses 2 superoxide + 2 H(+) = H2O2 + O2. Functionally, destroys superoxide anion radicals which are normally produced within the cells and which are toxic to biological systems. In Oryctolagus cuniculus (Rabbit), this protein is Superoxide dismutase [Mn], mitochondrial (SOD2).